Here is a 400-residue protein sequence, read N- to C-terminus: Molybdenum-containing formylmethanofuran dehydrogenase 1 subunit C (400 aa).

Repeat copies occupy residues 76-88 (GSGM…IING), 95-107 (GCEM…EVNG), 114-126 (GMEM…KING), 140-152 (WRGM…IIQG), 159-171 (GGGM…YIGG), 178-190 (GIRM…TVRG), and 197-209 (GAEM…KIHG). A 7 X 13 AA repeats of [GW]-X-X-M-X-X-G-X-I-X-[IV]-X-G region spans residues 76–209 (GSGMKSGKII…MVSGIIKIHG (134 aa)).

The protein in the N-terminal section; belongs to the FwdC/FmdC family. In the C-terminal section; belongs to the molybdenum dinucleotide binding protein family. As to quaternary structure, consists of five subunits; FmdA, FmdB, FmdC, FmdD, and FmdE.

It catalyses the reaction N-formylmethanofuran + 2 oxidized [2Fe-2S]-[ferredoxin] + H2O = methanofuran + 2 reduced [2Fe-2S]-[ferredoxin] + CO2 + H(+). It participates in one-carbon metabolism; methanogenesis from CO(2); 5,10-methenyl-5,6,7,8-tetrahydromethanopterin from CO(2): step 1/3. Its activity is regulated as follows. Inactivated by cyanide. Catalyzes the reversible oxidation of CO(2) and methanofuran (MFR) to N-formylmethanofuran (CHO-MFR). Can only oxidize formylmethanofuran. This enzyme is oxygen-labile. This is Molybdenum-containing formylmethanofuran dehydrogenase 1 subunit C (fmdC) from Methanothermobacter marburgensis (strain ATCC BAA-927 / DSM 2133 / JCM 14651 / NBRC 100331 / OCM 82 / Marburg) (Methanobacterium thermoautotrophicum).